The sequence spans 496 residues: Angiopoietin-2 (496 aa).

Positions 1-18 (MWQIIFLTFGWDLVLASA) are cleaved as a signal peptide. N-linked (GlcNAc...) asparagine glycosylation is found at asparagine 89, asparagine 119, asparagine 133, asparagine 151, asparagine 240, and asparagine 304. Residues 159 to 256 (QLLQHSISTN…QQHDLMETVN (98 aa)) adopt a coiled-coil conformation. Residues 275–495 (KEEQTTFRDC…ATTMMIRPAD (221 aa)) enclose the Fibrinogen C-terminal domain. Cysteine 284 and cysteine 313 are disulfide-bonded. Aspartate 429, aspartate 431, cysteine 433, and cysteine 435 together coordinate Ca(2+). 2 disulfides stabilise this stretch: cysteine 433–cysteine 435 and cysteine 437–cysteine 450.

As to quaternary structure, interacts with TEK/TIE2, competing for the same binding site as ANGPT1. Interacts with ITGA5. Interacts with SVEP1/polydom. Interacts with THBD; this interaction significantly inhibits the generation of activated PC and TAFIa/CPB2 by the thrombin/thrombomodulin complex. As to expression, expressed in the ovary, uterus and placenta.

The protein localises to the secreted. Binds to TEK/TIE2, competing for the ANGPT1 binding site, and modulating ANGPT1 signaling. Can induce tyrosine phosphorylation of TEK/TIE2 in the absence of ANGPT1. In the absence of angiogenic inducers, such as VEGF, ANGPT2-mediated loosening of cell-matrix contacts may induce endothelial cell apoptosis with consequent vascular regression. In concert with VEGF, it may facilitate endothelial cell migration and proliferation, thus serving as a permissive angiogenic signal. Involved in the regulation of lymphangiogenesis. In Mus musculus (Mouse), this protein is Angiopoietin-2 (Angpt2).